Reading from the N-terminus, the 398-residue chain is Tryptophan synthase beta chain (398 aa).

An N6-(pyridoxal phosphate)lysine modification is found at K88.

Belongs to the TrpB family. In terms of assembly, tetramer of two alpha and two beta chains. The cofactor is pyridoxal 5'-phosphate.

The catalysed reaction is (1S,2R)-1-C-(indol-3-yl)glycerol 3-phosphate + L-serine = D-glyceraldehyde 3-phosphate + L-tryptophan + H2O. Its pathway is amino-acid biosynthesis; L-tryptophan biosynthesis; L-tryptophan from chorismate: step 5/5. In terms of biological role, the beta subunit is responsible for the synthesis of L-tryptophan from indole and L-serine. The sequence is that of Tryptophan synthase beta chain from Histophilus somni (strain 2336) (Haemophilus somnus).